We begin with the raw amino-acid sequence, 629 residues long: Kelch-like protein 8 (629 aa).

Residues 1 to 10 (MASESTNGKQ) show a composition bias toward polar residues. Residues 1-40 (MASESTNGKQARSHVTKGRRQYQHQHQQQQQQQQQVRSRS) form a disordered region. N-acetylalanine is present on alanine 2. Over residues 11–23 (ARSHVTKGRRQYQ) the composition is skewed to basic residues. The segment covering 24 to 35 (HQHQQQQQQQQQ) has biased composition (low complexity). The 68-residue stretch at 76-143 (CDVTLKVGSK…VYSSRLTLTV (68 aa)) folds into the BTB domain. The region spanning 178 to 279 (CLAVRAFAES…LPVDFLMGVV (102 aa)) is the BACK domain. Kelch repeat units follow at residues 328-375 (VLFC…SVEG), 376-422 (KVYA…SLGG), 424-469 (IYAI…ALIN), 471-516 (VYAV…ELHG), 517-563 (CLYV…TVMG), and 565-610 (IFAV…VCDC).

In terms of assembly, component of the BCR(KLHL8) E3 ubiquitin ligase complex, at least composed of CUL3, KLHL8 and RBX1. Interacts with RAPSN.

It functions in the pathway protein modification; protein ubiquitination. Substrate-specific adapter of a BCR (BTB-CUL3-RBX1) E3 ubiquitin ligase complex required for The BCR(KLHL8) ubiquitin ligase complex mediates ubiquitination and degradation of RAPSN. This chain is Kelch-like protein 8 (Klhl8), found in Mus musculus (Mouse).